A 338-amino-acid polypeptide reads, in one-letter code: Ketol-acid reductoisomerase (NADP(+)) (338 aa).

Residues 1–181 (MRVYYDKDCD…GGGRSGIIET (181 aa)) form the KARI N-terminal Rossmann domain. Residues 24–27 (YGSQ), Arg47, Ser50, Ser52, and 82–85 (DENQ) contribute to the NADP(+) site. His107 is a catalytic residue. Position 133 (Gly133) interacts with NADP(+). Positions 182–327 (TFKDETETDL…EKLRGMMPWI (146 aa)) constitute a KARI C-terminal knotted domain. Residues Asp190, Glu194, Glu226, and Glu230 each coordinate Mg(2+). Substrate is bound at residue Ser251.

Belongs to the ketol-acid reductoisomerase family. Mg(2+) is required as a cofactor.

The catalysed reaction is (2R)-2,3-dihydroxy-3-methylbutanoate + NADP(+) = (2S)-2-acetolactate + NADPH + H(+). It carries out the reaction (2R,3R)-2,3-dihydroxy-3-methylpentanoate + NADP(+) = (S)-2-ethyl-2-hydroxy-3-oxobutanoate + NADPH + H(+). The protein operates within amino-acid biosynthesis; L-isoleucine biosynthesis; L-isoleucine from 2-oxobutanoate: step 2/4. It participates in amino-acid biosynthesis; L-valine biosynthesis; L-valine from pyruvate: step 2/4. Its function is as follows. Involved in the biosynthesis of branched-chain amino acids (BCAA). Catalyzes an alkyl-migration followed by a ketol-acid reduction of (S)-2-acetolactate (S2AL) to yield (R)-2,3-dihydroxy-isovalerate. In the isomerase reaction, S2AL is rearranged via a Mg-dependent methyl migration to produce 3-hydroxy-3-methyl-2-ketobutyrate (HMKB). In the reductase reaction, this 2-ketoacid undergoes a metal-dependent reduction by NADPH to yield (R)-2,3-dihydroxy-isovalerate. The chain is Ketol-acid reductoisomerase (NADP(+)) from Chromohalobacter salexigens (strain ATCC BAA-138 / DSM 3043 / CIP 106854 / NCIMB 13768 / 1H11).